We begin with the raw amino-acid sequence, 834 residues long: Periplasmic nitrate reductase (834 aa).

The segment at residues 1-32 (MTEPKIDRRQLLKLEAAAIAAAAAGMPTVARA) is a signal peptide (tat-type signal). The 57-residue stretch at 44 to 100 (LKWDKAACRFCGTGCSVMVATKDNRVVATHGDIKAEVNRGLNCVKGYFLSKIMYGHD) folds into the 4Fe-4S Mo/W bis-MGD-type domain. The [4Fe-4S] cluster site is built by Cys51, Cys54, Cys58, and Cys86. Mo-bis(molybdopterin guanine dinucleotide) is bound by residues Lys88, Gln155, Asn180, Cys184, 217–224 (WGSNMAEM), 248–252 (STFEH), 267–269 (QTD), Met378, Gln382, Asn488, 514–515 (SD), Lys537, Asp564, and 724–733 (TGRVVEHWHS). Residue Trp800 participates in substrate binding. Mo-bis(molybdopterin guanine dinucleotide) is bound by residues Asn808 and Lys825.

The protein belongs to the prokaryotic molybdopterin-containing oxidoreductase family. NasA/NapA/NarB subfamily. In terms of assembly, component of the periplasmic nitrate reductase NapAB complex composed of NapA and NapB. [4Fe-4S] cluster serves as cofactor. It depends on Mo-bis(molybdopterin guanine dinucleotide) as a cofactor. In terms of processing, predicted to be exported by the Tat system. The position of the signal peptide cleavage has not been experimentally proven.

It localises to the periplasm. The catalysed reaction is 2 Fe(II)-[cytochrome] + nitrate + 2 H(+) = 2 Fe(III)-[cytochrome] + nitrite + H2O. Its function is as follows. Catalytic subunit of the periplasmic nitrate reductase complex NapAB. Receives electrons from NapB and catalyzes the reduction of nitrate to nitrite. The sequence is that of Periplasmic nitrate reductase from Bradyrhizobium sp. (strain ORS 278).